The primary structure comprises 184 residues: Large ribosomal subunit protein uL18 (184 aa).

Belongs to the universal ribosomal protein uL18 family. In terms of assembly, part of the 50S ribosomal subunit. Contacts the 5S and 23S rRNAs.

In terms of biological role, this is one of the proteins that bind and probably mediate the attachment of the 5S RNA into the large ribosomal subunit, where it forms part of the central protuberance. In Haloferax volcanii (strain ATCC 29605 / DSM 3757 / JCM 8879 / NBRC 14742 / NCIMB 2012 / VKM B-1768 / DS2) (Halobacterium volcanii), this protein is Large ribosomal subunit protein uL18 (rpl18).